The following is a 287-amino-acid chain: Diaminopimelate epimerase (287 aa).

Substrate-binding residues include N13, Q46, and N66. C75 acts as the Proton donor in catalysis. Residues 76–77 (GN), N166, N199, and 217–218 (ER) contribute to the substrate site. Residue C226 is the Proton acceptor of the active site. 227–228 (GT) is a substrate binding site.

This sequence belongs to the diaminopimelate epimerase family. In terms of assembly, homodimer.

The protein resides in the cytoplasm. The enzyme catalyses (2S,6S)-2,6-diaminopimelate = meso-2,6-diaminopimelate. It functions in the pathway amino-acid biosynthesis; L-lysine biosynthesis via DAP pathway; DL-2,6-diaminopimelate from LL-2,6-diaminopimelate: step 1/1. In terms of biological role, catalyzes the stereoinversion of LL-2,6-diaminopimelate (L,L-DAP) to meso-diaminopimelate (meso-DAP), a precursor of L-lysine and an essential component of the bacterial peptidoglycan. This is Diaminopimelate epimerase from Paraburkholderia xenovorans (strain LB400).